The chain runs to 181 residues: ADP-ribosylation factor 1 (181 aa).

Gly-2 carries the N-myristoyl glycine lipid modification. Residues 24–31, 67–71, and 126–129 each bind GTP; these read GLDAAGKT, DVGGQ, and NKQD.

It belongs to the small GTPase superfamily. Arf family. As to quaternary structure, interacts with AGD7 and GDAP1. GDP-locked form interacts with cytosolic tail of p24 proteins. Interacts with AGD5 at trans-Golgi network. Interacts with A.tumefaciens AK6b.

The protein resides in the golgi apparatus. It localises to the endosome. It is found in the trans-Golgi network. The protein localises to the early endosome. It carries out the reaction GTP + H2O = GDP + phosphate + H(+). Its activity is regulated as follows. Activated by AGD7 and AGD10. Its function is as follows. GTP-binding protein involved in protein trafficking; required for the sequence-specific vacuolar sorting route to the lytic vacuole, for the ER-to-Golgi transport and for the Golgi-derived transport to the plasma membrane. Involved in the recruitment of COPI and GDAP1 to membranes. Required for recycling of PIN auxin transporters (e.g. PIN1 and PIN2) in a fungal toxin brefeldin A (BFA)-dependent manner. Involved in various auxin-dependent developmental processes. This Arabidopsis thaliana (Mouse-ear cress) protein is ADP-ribosylation factor 1.